Here is a 292-residue protein sequence, read N- to C-terminus: NAD kinase (292 aa).

Catalysis depends on Asp-73, which acts as the Proton acceptor. Residues 73-74 (DG), 147-148 (NE), His-158, Arg-175, Asp-177, 188-193 (TAYSLS), and Gln-247 each bind NAD(+).

The protein belongs to the NAD kinase family. It depends on a divalent metal cation as a cofactor.

The protein localises to the cytoplasm. The catalysed reaction is NAD(+) + ATP = ADP + NADP(+) + H(+). Its function is as follows. Involved in the regulation of the intracellular balance of NAD and NADP, and is a key enzyme in the biosynthesis of NADP. Catalyzes specifically the phosphorylation on 2'-hydroxyl of the adenosine moiety of NAD to yield NADP. The protein is NAD kinase of Salmonella choleraesuis (strain SC-B67).